The following is a 94-amino-acid chain: Aspartyl/glutamyl-tRNA(Asn/Gln) amidotransferase subunit C (94 aa).

Belongs to the GatC family. As to quaternary structure, heterotrimer of A, B and C subunits.

It carries out the reaction L-glutamyl-tRNA(Gln) + L-glutamine + ATP + H2O = L-glutaminyl-tRNA(Gln) + L-glutamate + ADP + phosphate + H(+). The enzyme catalyses L-aspartyl-tRNA(Asn) + L-glutamine + ATP + H2O = L-asparaginyl-tRNA(Asn) + L-glutamate + ADP + phosphate + 2 H(+). Functionally, allows the formation of correctly charged Asn-tRNA(Asn) or Gln-tRNA(Gln) through the transamidation of misacylated Asp-tRNA(Asn) or Glu-tRNA(Gln) in organisms which lack either or both of asparaginyl-tRNA or glutaminyl-tRNA synthetases. The reaction takes place in the presence of glutamine and ATP through an activated phospho-Asp-tRNA(Asn) or phospho-Glu-tRNA(Gln). This chain is Aspartyl/glutamyl-tRNA(Asn/Gln) amidotransferase subunit C, found in Desulfitobacterium hafniense (strain DSM 10664 / DCB-2).